Consider the following 310-residue polypeptide: Putative S-adenosyl-L-methionine-dependent methyltransferase MAP_2076c (310 aa).

S-adenosyl-L-methionine-binding positions include aspartate 131 and 160–161 (DL).

It belongs to the UPF0677 family.

In terms of biological role, exhibits S-adenosyl-L-methionine-dependent methyltransferase activity. This chain is Putative S-adenosyl-L-methionine-dependent methyltransferase MAP_2076c, found in Mycolicibacterium paratuberculosis (strain ATCC BAA-968 / K-10) (Mycobacterium paratuberculosis).